A 790-amino-acid chain; its full sequence is MDLDIDQMEKKWLKYWEDNDIYTFIPSEREKVFTIDTPPPTVSGKMHMGHSFSYSHIDFIARYKRMRGYHVFFPWGFDDNGLATERYVEKETGIKPTDGNVEHFINLCREFSQASEKALIEGWKRMGMSCYFKDYYVTSSPESVKISQSMFLDLVKKNRVYRDLAPTIRCPTCKTSISQIEMKDEMLKSKLVYINFDVEGSKLTIATSRPELLGSCVALFVNNEDERYKNIIGREATVPLFGHKVPIMGDESIDKDFGTGAEMVCTFGDQNDLDLWKKYSLPLRISIDKDGKMNENAGPLNGLSINDGRKKIIELLKSEGFVVKEEDIKHSVNTHERCGTPVEIFIEKQWFIRYLDLKKDFIDSGRAVKWIPDYMRTRYENWVNGLKWDWCISRQRYYGVPFPVWYCSDCGNTVFADDKDLPVDPRLQPPSKRCDKCGSSNLVPERDVMDTWATSSLTPRIALSHFGLFDKYYPEDLRGQGHDIISFWAFTTIARSKIHDNTIPWLTLMISGNVFDMYGEKMSKSKGNIVDIYAITDKYGADALRFWASTVSQGEDIRVKEQDFVRGRRTVIKMYNANRLIDILRNGRPLKNVDEPKHPVNLWILTEESKVVKLVTDSMDNYEVSKARSALDVFFWNTFCDNYLEMIKAIVQAANEKNDLGTVDETIYTASKVMRDVVKMYAPIMPFITEEIYQSIEIEGKKKSVHIDCWPMENREYVEASEVRYVTSIIDKIRAAKSNAKVSVGTPVRKALIKCNASIAEKYRDMLSRMMRIGSIDIEDSDKLEVSVEP.

A 'HIGH' region motif is present at residues 40–50 (PTVSGKMHMGH). A 'KMSKS' region motif is present at residues 521 to 525 (KMSKS). Lys-524 contributes to the ATP binding site.

This sequence belongs to the class-I aminoacyl-tRNA synthetase family. ValS type 2 subfamily.

Its subcellular location is the cytoplasm. It carries out the reaction tRNA(Val) + L-valine + ATP = L-valyl-tRNA(Val) + AMP + diphosphate. In terms of biological role, catalyzes the attachment of valine to tRNA(Val). As ValRS can inadvertently accommodate and process structurally similar amino acids such as threonine, to avoid such errors, it has a 'posttransfer' editing activity that hydrolyzes mischarged Thr-tRNA(Val) in a tRNA-dependent manner. The polypeptide is Valine--tRNA ligase (Thermoplasma volcanium (strain ATCC 51530 / DSM 4299 / JCM 9571 / NBRC 15438 / GSS1)).